The following is a 270-amino-acid chain: uncharacterized protein (270 aa).

This is an uncharacterized protein from Methanocaldococcus jannaschii (strain ATCC 43067 / DSM 2661 / JAL-1 / JCM 10045 / NBRC 100440) (Methanococcus jannaschii).